The primary structure comprises 398 residues: Succinate--CoA ligase [ADP-forming] subunit beta (398 aa).

The 245-residue stretch at 9-253 folds into the ATP-grasp domain; that stretch reads KEILASYGVR…IREENPIEVE (245 aa). ATP is bound by residues lysine 50, 57 to 59, valine 106, and glutamate 116; that span reads GRG. Residues asparagine 208 and aspartate 222 each contribute to the Mg(2+) site. Residues asparagine 273 and 330-332 each bind substrate; that span reads GIV.

Belongs to the succinate/malate CoA ligase beta subunit family. As to quaternary structure, heterotetramer of two alpha and two beta subunits. It depends on Mg(2+) as a cofactor.

The enzyme catalyses succinate + ATP + CoA = succinyl-CoA + ADP + phosphate. It catalyses the reaction GTP + succinate + CoA = succinyl-CoA + GDP + phosphate. It functions in the pathway carbohydrate metabolism; tricarboxylic acid cycle; succinate from succinyl-CoA (ligase route): step 1/1. In terms of biological role, succinyl-CoA synthetase functions in the citric acid cycle (TCA), coupling the hydrolysis of succinyl-CoA to the synthesis of either ATP or GTP and thus represents the only step of substrate-level phosphorylation in the TCA. The beta subunit provides nucleotide specificity of the enzyme and binds the substrate succinate, while the binding sites for coenzyme A and phosphate are found in the alpha subunit. This Flavobacterium psychrophilum (strain ATCC 49511 / DSM 21280 / CIP 103535 / JIP02/86) protein is Succinate--CoA ligase [ADP-forming] subunit beta.